A 240-amino-acid polypeptide reads, in one-letter code: Aquaporin SIP1-1 (240 aa).

A run of 2 helical transmembrane segments spans residues 13-33 (LMTF…AAII) and 44-64 (APLV…TVIF). The NPA 1 signature appears at 70–72 (NPT). The next 3 membrane-spanning stretches (helical) occupy residues 89–109 (SLAI…LAIM), 132–152 (GAIA…LIIL), and 163–183 (FLLA…TGPA). An NPA 2 motif is present at residues 185-187 (NPA). The chain crosses the membrane as a helical span at residues 203–223 (DHIYVYWISSFVGALSAALLF).

This sequence belongs to the MIP/aquaporin (TC 1.A.8) family. SIP (TC 1.A.8.10) subfamily. As to expression, expressed in roots and above ground. Expressed in elongating regions of the root tips, trichome cells of the rosette leaves, vascular tissues of the flower petals, stigma, stamens (anthers and filaments), pollen and the top and bottom (receptacle) of siliques.

It is found in the endoplasmic reticulum membrane. Functionally, water channel required to facilitate the transport of water across cell membrane. This Arabidopsis thaliana (Mouse-ear cress) protein is Aquaporin SIP1-1 (SIP1-1).